The chain runs to 252 residues: MPNASLVIANWKMNGNRELTKTMSAALREKLNQLQQVKLVICPPFTLIGELANQCYYDDIAIGAQNVSEHTGGAFTGEISTAQLQEFGVSYVLVGHSERRQLFAETDKMVNEKALATVNAGMTAVICVGENKAQRDEGNTWEVVAQQAQAALADLPKEQAGKIVLAYEPVWAIGTGETASPEQAQDVHAKLRALLVEQFGAIGEKMPLLYGGSVKADNAAELFAQKDIDGGLIGGASLKESDFVAICQAAQG.

10-12 (NWK) contacts substrate. His-96 acts as the Electrophile in catalysis. Glu-168 acts as the Proton acceptor in catalysis. Residues Gly-174, Ser-213, and 234–235 (GG) contribute to the substrate site.

Belongs to the triosephosphate isomerase family. Homodimer.

It is found in the cytoplasm. It carries out the reaction D-glyceraldehyde 3-phosphate = dihydroxyacetone phosphate. Its pathway is carbohydrate biosynthesis; gluconeogenesis. The protein operates within carbohydrate degradation; glycolysis; D-glyceraldehyde 3-phosphate from glycerone phosphate: step 1/1. Functionally, involved in the gluconeogenesis. Catalyzes stereospecifically the conversion of dihydroxyacetone phosphate (DHAP) to D-glyceraldehyde-3-phosphate (G3P). This is Triosephosphate isomerase from Idiomarina loihiensis (strain ATCC BAA-735 / DSM 15497 / L2-TR).